A 365-amino-acid polypeptide reads, in one-letter code: Isopentenyl-diphosphate delta-isomerase (365 aa).

Residue 8-9 (RK) participates in substrate binding. Residues 67 to 69 (SIT), S97, and N126 contribute to the FMN site. Substrate is bound at residue 97–99 (SQR). A substrate-binding site is contributed by Q160. E161 is a binding site for Mg(2+). Residues K192, T222, 272–274 (GIR), and 293–294 (AL) contribute to the FMN site.

It belongs to the IPP isomerase type 2 family. Homooctamer. Dimer of tetramers. FMN is required as a cofactor. It depends on NADPH as a cofactor. Mg(2+) serves as cofactor.

It is found in the cytoplasm. It catalyses the reaction isopentenyl diphosphate = dimethylallyl diphosphate. Its function is as follows. Involved in the biosynthesis of isoprenoids. Catalyzes the 1,3-allylic rearrangement of the homoallylic substrate isopentenyl (IPP) to its allylic isomer, dimethylallyl diphosphate (DMAPP). In Methanosarcina barkeri (strain Fusaro / DSM 804), this protein is Isopentenyl-diphosphate delta-isomerase.